The following is a 284-amino-acid chain: L-ribulose-5-phosphate 3-epimerase UlaE (284 aa).

The protein belongs to the L-ribulose-5-phosphate 3-epimerase family.

It catalyses the reaction L-ribulose 5-phosphate = L-xylulose 5-phosphate. It participates in cofactor degradation; L-ascorbate degradation; D-xylulose 5-phosphate from L-ascorbate: step 3/4. Functionally, catalyzes the isomerization of L-xylulose-5-phosphate to L-ribulose-5-phosphate. Is involved in the anaerobic L-ascorbate utilization. The chain is L-ribulose-5-phosphate 3-epimerase UlaE from Shigella sonnei (strain Ss046).